A 629-amino-acid chain; its full sequence is Interleukin-23 receptor (629 aa).

Positions 1 to 23 are cleaved as a signal peptide; that stretch reads MNQVTIQWDAVIALYILFSWCHG. At 24-355 the chain is on the extracellular side; it reads GITNINCSGH…LTSDNRGDIG (332 aa). An N-linked (GlcNAc...) asparagine; partial glycan is attached at Asn29. Residues Asn47, Asn81, and Asn141 are each glycosylated (N-linked (GlcNAc...) asparagine). Fibronectin type-III domains follow at residues 127–217 and 219–318; these read IPDE…LDDI and IPSA…TPET. A glycan (N-linked (GlcNAc...) (high mannose) asparagine) is linked at Asn180. Residues Asn232 and Asn262 are each glycosylated (N-linked (GlcNAc...) asparagine). N-linked (GlcNAc...) asparagine; partial glycosylation is present at Asn273. A helical membrane pass occupies residues 356–376; that stretch reads LLLGMIVFAVMLSILSLIGIF. Residues 377–629 are Cytoplasmic-facing; sequence NRSFRTGIKR…HFNRISLLEK (253 aa).

The protein belongs to the type I cytokine receptor family. Type 2 subfamily. As to quaternary structure, heterodimer with IL12RB1. In presence of IL23, the heterodimer forms the IL23 receptor. Interacts with JAK2 and in presence of IL23 with STAT3. In terms of processing, phosphorylated in response to IL23. As to expression, expressed by monocytes, Th1, Th0, NK and dendritic cells. Isoform 1 is specifically expressed in NK cells.

The protein localises to the cell membrane. Functionally, associates with IL12RB1 to form the interleukin-23 receptor. Binds IL23 and mediates T-cells, NK cells and possibly certain macrophage/myeloid cells stimulation probably through activation of the Jak-Stat signaling cascade. IL23 functions in innate and adaptive immunity and may participate in acute response to infection in peripheral tissues. IL23 may be responsible for autoimmune inflammatory diseases and be important for tumorigenesis. This Homo sapiens (Human) protein is Interleukin-23 receptor (IL23R).